The primary structure comprises 281 residues: NADH-quinone oxidoreductase subunit B (281 aa).

Cysteine 37, cysteine 38, cysteine 103, and cysteine 132 together coordinate [4Fe-4S] cluster. The segment at 242–281 is disordered; the sequence is DAKPLDESRAHGPGPTTADIADAADTADSDAAPGATHDTP. Low complexity predominate over residues 257–281; that stretch reads TTADIADAADTADSDAAPGATHDTP.

This sequence belongs to the complex I 20 kDa subunit family. In terms of assembly, NDH-1 is composed of 14 different subunits. Subunits NuoB, C, D, E, F, and G constitute the peripheral sector of the complex. It depends on [4Fe-4S] cluster as a cofactor.

It is found in the cell membrane. The catalysed reaction is a quinone + NADH + 5 H(+)(in) = a quinol + NAD(+) + 4 H(+)(out). Functionally, NDH-1 shuttles electrons from NADH, via FMN and iron-sulfur (Fe-S) centers, to quinones in the respiratory chain. The immediate electron acceptor for the enzyme in this species is believed to be a menaquinone. Couples the redox reaction to proton translocation (for every two electrons transferred, four hydrogen ions are translocated across the cytoplasmic membrane), and thus conserves the redox energy in a proton gradient. In Frankia alni (strain DSM 45986 / CECT 9034 / ACN14a), this protein is NADH-quinone oxidoreductase subunit B.